The following is a 315-amino-acid chain: Probable cell division protein kinase ECU11_1290 (315 aa).

In terms of domain architecture, Protein kinase spans 13 to 294; the sequence is YEKVCRISSG…ASQGLCSGFV (282 aa). Residues 19–27 and K42 each bind ATP; that span reads ISSGSFGNV. D138 functions as the Proton acceptor in the catalytic mechanism.

This sequence belongs to the protein kinase superfamily. CMGC Ser/Thr protein kinase family. CDC2/CDKX subfamily.

Its subcellular location is the nucleus. The enzyme catalyses L-seryl-[protein] + ATP = O-phospho-L-seryl-[protein] + ADP + H(+). It carries out the reaction L-threonyl-[protein] + ATP = O-phospho-L-threonyl-[protein] + ADP + H(+). Its function is as follows. May play a role in the control of the eukaryotic cell cycle. The protein is Probable cell division protein kinase ECU11_1290 of Encephalitozoon cuniculi (strain GB-M1) (Microsporidian parasite).